Consider the following 607-residue polypeptide: Nexilin (607 aa).

A compositionally biased stretch (basic and acidic residues) spans 1 to 14; sequence MNDVSQKAEIKEML. Disordered regions lie at residues 1-143 and 165-268; these read MNDV…EDKM and ETEA…RRRI. Residue Ser-16 is modified to Phosphoserine. Basic and acidic residues-rich tracts occupy residues 40–85, 120–143, 167–221, and 228–268; these read GKFD…RAEQ, KTKDPEDLDREEGNGRTNHEEDKM, EAKK…HMVN, and DRET…RRRI. Ser-172 carries the post-translational modification Phosphoserine. A phosphoserine mark is found at Ser-281, Ser-288, and Ser-296. Thr-301 bears the Phosphothreonine mark. Disordered regions lie at residues 419-444 and 480-514; these read NFHEDDDVDVRPAKKSESPFTHKVNM and AALQKKREDEEEEEGSIVNGSTTEDEEQTRSGAPW. A phosphoserine mark is found at Ser-495 and Ser-500. At Thr-502 the chain carries Phosphothreonine. Residues 513-601 enclose the Ig-like domain; sequence PWFKKPLRNT…GSAASTCILT (89 aa).

In terms of assembly, interacts with F-actin.

The protein localises to the cytoplasm. The protein resides in the cytoskeleton. It localises to the cell junction. Its subcellular location is the adherens junction. It is found in the myofibril. The protein localises to the sarcomere. The protein resides in the z line. Its function is as follows. Involved in regulating cell migration through association with the actin cytoskeleton. Has an essential role in the maintenance of Z line and sarcomere integrity. This is Nexilin from Mus musculus (Mouse).